The following is a 936-amino-acid chain: ATP-dependent RNA helicase dbp10 (936 aa).

Residues 1–48 (MPSRAASPALSENEFDITGALFQNDSDSDAETQKPTKRKKVPAAPNVN) form a disordered region. The Q motif motif lies at 91–119 (GGFQAMGLNANLLKAIARKGFSVPTPIQR). Positions 122 to 294 (IPVIMEDQDV…RAGLQDPTLV (173 aa)) constitute a Helicase ATP-binding domain. Position 135–142 (135–142 (ARTGSGKT)) interacts with ATP. Positions 242-245 (DEAD) match the DEAD box motif. Disordered stretches follow at residues 337–363 (TEASLRLKEKGPEDSKNKKRKRAEMER), 642–684 (EAKK…PDNM), 701–721 (TTDKASKSNSNSKSDSTPTTL), and 843–936 (TPGL…SRKK). Residues 341–352 (LRLKEKGPEDSK) show a composition bias toward basic and acidic residues. A Helicase C-terminal domain is found at 360–511 (EMERAVNMKE…SDQVNFAEDV (152 aa)). Positions 663–675 (AEVDGDAFSDLEG) are enriched in acidic residues. Low complexity predominate over residues 701–717 (TTDKASKSNSNSKSDST). Residues 867 to 895 (EKAPKAADPLRGDYEKMKKKAEAARERAA) show a composition bias toward basic and acidic residues. Residues 896–906 (SKVGGVTSGGK) are compositionally biased toward low complexity. Positions 907–916 (SEIRNTDDIR) are enriched in basic and acidic residues. Positions 917 to 936 (KARKLKQKRREKNARPSRKK) are enriched in basic residues.

The protein belongs to the DEAD box helicase family. DDX54/DBP10 subfamily.

The protein resides in the nucleus. Its subcellular location is the nucleolus. The catalysed reaction is ATP + H2O = ADP + phosphate + H(+). Its function is as follows. ATP-binding RNA helicase involved in the biogenesis of 60S ribosomal subunits and is required for the normal formation of 25S and 5.8S rRNAs. The polypeptide is ATP-dependent RNA helicase dbp10 (dbp10) (Emericella nidulans (strain FGSC A4 / ATCC 38163 / CBS 112.46 / NRRL 194 / M139) (Aspergillus nidulans)).